The following is a 205-amino-acid chain: ATP-dependent Clp protease proteolytic subunit (205 aa).

Catalysis depends on S101, which acts as the Nucleophile. H126 is an active-site residue.

Belongs to the peptidase S14 family. Component of the chloroplastic Clp protease core complex.

The protein resides in the plastid. The protein localises to the chloroplast stroma. The enzyme catalyses Hydrolysis of proteins to small peptides in the presence of ATP and magnesium. alpha-casein is the usual test substrate. In the absence of ATP, only oligopeptides shorter than five residues are hydrolyzed (such as succinyl-Leu-Tyr-|-NHMec, and Leu-Tyr-Leu-|-Tyr-Trp, in which cleavage of the -Tyr-|-Leu- and -Tyr-|-Trp bonds also occurs).. Cleaves peptides in various proteins in a process that requires ATP hydrolysis. Has a chymotrypsin-like activity. Plays a major role in the degradation of misfolded proteins. The chain is ATP-dependent Clp protease proteolytic subunit from Pinus contorta (Shore pine).